A 326-amino-acid polypeptide reads, in one-letter code: tRNA U34 carboxymethyltransferase (326 aa).

Carboxy-S-adenosyl-L-methionine-binding residues include lysine 91, tryptophan 105, lysine 110, glycine 130, methionine 196, tyrosine 200, and arginine 315.

Belongs to the class I-like SAM-binding methyltransferase superfamily. CmoB family. As to quaternary structure, homotetramer.

The enzyme catalyses carboxy-S-adenosyl-L-methionine + 5-hydroxyuridine(34) in tRNA = 5-carboxymethoxyuridine(34) in tRNA + S-adenosyl-L-homocysteine + H(+). In terms of biological role, catalyzes carboxymethyl transfer from carboxy-S-adenosyl-L-methionine (Cx-SAM) to 5-hydroxyuridine (ho5U) to form 5-carboxymethoxyuridine (cmo5U) at position 34 in tRNAs. The protein is tRNA U34 carboxymethyltransferase of Tolumonas auensis (strain DSM 9187 / NBRC 110442 / TA 4).